A 35-amino-acid chain; its full sequence is Turripeptide gsp9a (35 aa).

A 4-hydroxyproline mark is found at proline 3 and proline 4. Disulfide bonds link cysteine 7-cysteine 22, cysteine 12-cysteine 26, and cysteine 18-cysteine 33. Residues glutamate 14 and glutamate 17 each carry the 4-carboxyglutamate modification.

Expressed by the venom duct.

Its subcellular location is the secreted. This Gemmula speciosa (Splendid gem-turris) protein is Turripeptide gsp9a.